A 291-amino-acid polypeptide reads, in one-letter code: ATP synthase gamma chain (291 aa).

Belongs to the ATPase gamma chain family. In terms of assembly, F-type ATPases have 2 components, CF(1) - the catalytic core - and CF(0) - the membrane proton channel. CF(1) has five subunits: alpha(3), beta(3), gamma(1), delta(1), epsilon(1). CF(0) has three main subunits: a, b and c.

The protein resides in the cell inner membrane. Functionally, produces ATP from ADP in the presence of a proton gradient across the membrane. The gamma chain is believed to be important in regulating ATPase activity and the flow of protons through the CF(0) complex. In Sulfurihydrogenibium sp. (strain YO3AOP1), this protein is ATP synthase gamma chain.